Here is a 151-residue protein sequence, read N- to C-terminus: Chaperonin GroEL (151 aa).

41–45 (DGTTT) is an ATP binding site.

This sequence belongs to the chaperonin (HSP60) family. In terms of assembly, forms a cylinder of 14 subunits composed of two heptameric rings stacked back-to-back. Interacts with the co-chaperonin GroES.

It localises to the cytoplasm. It catalyses the reaction ATP + H2O + a folded polypeptide = ADP + phosphate + an unfolded polypeptide.. Functionally, together with its co-chaperonin GroES, plays an essential role in assisting protein folding. The GroEL-GroES system forms a nano-cage that allows encapsulation of the non-native substrate proteins and provides a physical environment optimized to promote and accelerate protein folding. This Mycolicibacterium fortuitum (Mycobacterium fortuitum) protein is Chaperonin GroEL.